A 59-amino-acid chain; its full sequence is uncharacterized protein (59 aa).

A signal peptide spans 1 to 17 (MIASIWYAELGCASAIA).

This is an uncharacterized protein from Rickettsia prowazekii (strain Madrid E).